The chain runs to 51 residues: Sperm protamine P1 (51 aa).

Belongs to the protamine P1 family. As to expression, testis.

Its subcellular location is the nucleus. The protein localises to the chromosome. In terms of biological role, protamines substitute for histones in the chromatin of sperm during the haploid phase of spermatogenesis. They compact sperm DNA into a highly condensed, stable and inactive complex. The protein is Sperm protamine P1 (PRM1) of Trachypithecus francoisi (Francois' leaf monkey).